The primary structure comprises 299 residues: MGLTSILIAQVLFLGAANSAVVKRWPCSVSPTGPTDPSVAKNCGYWVNDVAKNDQCADLEGYFDISREELVNWNPSLKENCRLQNGHSYCVAASDLTTRSTDSAEEASRMDMATGVEAADLPSPTQGGLAANCNAFYKVKTGDSCWSIINDFGNFSIYDFYRWNPSVGQSCEALYPDYYVCIGVQEQEPPVATPTNPPGPVLSGTPANCNKYHKVLSGDNCWAIANQYGISLDQFYSWNPAVKPTSCQSLLPDYYVCVGVAETPSATATPQPTPQPQQSSSPDQPMPQPILSRLLRILL.

The signal sequence occupies residues 1 to 19 (MGLTSILIAQVLFLGAANS). LysM domains are found at residues 46–91 (WVND…SYCV), 135–182 (AFYK…YVCI), and 211–258 (KYHK…YVCV). N-linked (GlcNAc...) asparagine glycosylation occurs at Asn154. Residues 266–283 (ATATPQPTPQPQQSSSPD) show a composition bias toward low complexity. The interval 266–288 (ATATPQPTPQPQQSSSPDQPMPQ) is disordered.

It belongs to the secreted LysM effector family.

The protein localises to the secreted. The protein resides in the cell wall. It localises to the extracellular space. It is found in the extracellular matrix. Cell wall chitin of A.fumigatus recruits lung eosinophils during infection and ldpB might have a role in sequestration of chitin and act as triggers of host immunity to dampen host defense. This Aspergillus fumigatus (strain ATCC MYA-4609 / CBS 101355 / FGSC A1100 / Af293) (Neosartorya fumigata) protein is Secreted LysM effector ldpB.